Consider the following 381-residue polypeptide: Ribosome assembly 1 protein (381 aa).

An N-acetylmethionine modification is found at Met1. Disordered regions lie at residues 1-38 (MNYNNFENSKGDGHSRLPKPTYSGTLSDGYDESKIKRQ), 164-216 (KDTF…DRDE), and 350-381 (FGSSEDNNKNHYKPNYKNRKPNLSRANFTRNK). Ser172 is modified (phosphoserine). Basic residues predominate over residues 359 to 371 (NHYKPNYKNRKPN).

Its subcellular location is the nucleus. Involved in a late nucleoplasmic step of 60S ribosomal subunit assembly. The sequence is that of Ribosome assembly 1 protein (RSA1) from Saccharomyces cerevisiae (strain ATCC 204508 / S288c) (Baker's yeast).